The primary structure comprises 337 residues: TGEKPFDCTECGKSFTDLKTLQHHYKIHTGEKPFICAECGKGFNQKTTLLNHSKIHTTEKPFPCTECGKCFTERKTLLNHNKIHTGEKPFICAECGIGFTQKTTLLNHSKIHTTEKPFPCTECGKCFTERKTLLNHNKIHTGEKPFICAECGIGFTQKTTLLNHSKIHTTEKPFPCTECGKCFAEKKTLQNHNKIHTGVKPFTCTDCGKSFTQRTSLQNHVKIHTGEKPFTCTECGKSFSEKKTLREHNKIHTGEKPFTCTYCGKSFSQRISLQNHFKIHTGEKPFSCTECGKCFTIKSTLQSHLKRTHTGEKPFTCTECGKSFTKKKILLKHNKIH.

12 C2H2-type zinc fingers span residues 6 to 28 (FDCT…YKIH), 34 to 56 (FICA…SKIH), 62 to 84 (FPCT…NKIH), 90 to 112 (FICA…SKIH), 118 to 140 (FPCT…NKIH), 146 to 168 (FICA…SKIH), 174 to 196 (FPCT…NKIH), 202 to 224 (FTCT…VKIH), 230 to 252 (FTCT…NKIH), 258 to 280 (FTCT…FKIH), 286 to 309 (FSCT…KRTH), and 315 to 337 (FTCT…NKIH).

It belongs to the krueppel C2H2-type zinc-finger protein family.

The protein localises to the nucleus. In terms of biological role, may be involved in transcriptional regulation. This is Gastrula zinc finger protein XlCGF26.1 from Xenopus laevis (African clawed frog).